We begin with the raw amino-acid sequence, 1005 residues long: uncharacterized protein (1005 aa).

Residues 1–24 form the signal peptide; the sequence is MKFQRKYWGLLSTLGVSSAVALSA. Cys25 carries the N-palmitoyl cysteine lipid modification. Cys25 carries the S-diacylglycerol cysteine lipid modification. Disordered stretches follow at residues 105–165 and 786–825; these read KKDK…EEKF and TQKI…WDDV. 2 stretches are compositionally biased toward low complexity: residues 110–131 and 145–156; these read TSSQ…TSTS and QSSSNGQNNQQS. The segment covering 786–801 has biased composition (polar residues); that stretch reads TQKIDQQNTASTTSDV.

Its subcellular location is the cell membrane. This is an uncharacterized protein from Mycoplasma pneumoniae (strain ATCC 29342 / M129 / Subtype 1) (Mycoplasmoides pneumoniae).